The sequence spans 589 residues: Peptide transporter PTR_A (589 aa).

The disordered stretch occupies residues 1-56; the sequence is MSETKPAANDLSNVPSASDSDKDNSLDKVHSLEKTGVHEDINKLPSSDLEQLEDDG. A compositionally biased stretch (basic and acidic residues) spans 19–42; it reads DSDKDNSLDKVHSLEKTGVHEDIN. A run of 4 helical transmembrane segments spans residues 74 to 95, 124 to 144, 153 to 173, and 180 to 200; these read IPLS…YYGL, ALSY…AWIA, AICI…ITSI, and NTSL…TGGV. N-linked (GlcNAc...) asparagine glycosylation occurs at Asn233. The next 8 membrane-spanning stretches (helical) occupy residues 236–256, 266–286, 345–365, 388–408, 420–440, 467–487, 502–522, and 533–553; these read IQNV…SVIA, FWAG…VLLL, VYAC…GQMI, INAI…YPFI, IFWG…LQHF, IAIQ…ASIT, SFIM…GIAL, and WTYT…YIIF.

Belongs to the major facilitator superfamily. Proton-dependent oligopeptide transporter (POT/PTR) (TC 2.A.17) family.

Its subcellular location is the cell membrane. It carries out the reaction a dipeptide(out) + H(+)(out) = a dipeptide(in) + H(+)(in). It catalyses the reaction an L-amino acid tripeptide(out) + H(+)(out) = an L-amino acid tripeptide(in) + H(+)(in). Its function is as follows. Peptide transporter that exploits the inwardly directed proton motive force to facilitate the cellular uptake of di/tripeptides. This chain is Peptide transporter PTR_A, found in Candidozyma auris (Yeast).